The following is a 432-amino-acid chain: Homogentisate 1,2-dioxygenase (432 aa).

Residues H333, E339, and H369 each coordinate Fe cation.

Belongs to the homogentisate dioxygenase family. The cofactor is Fe cation.

It carries out the reaction homogentisate + O2 = 4-maleylacetoacetate + H(+). It participates in amino-acid degradation; L-phenylalanine degradation; acetoacetate and fumarate from L-phenylalanine: step 4/6. The sequence is that of Homogentisate 1,2-dioxygenase (hgd) from Dictyostelium discoideum (Social amoeba).